Here is a 94-residue protein sequence, read N- to C-terminus: C-X-C motif chemokine 11 (94 aa).

A signal peptide spans 1 to 21 (MSVKGMAIALAVILCATVVQG). A Citrulline; by PAD2 modification is found at Arg27. Intrachain disulfides connect Cys30/Cys57 and Cys32/Cys74.

Interacts with TNFAIP6 (via Link domain). High levels in peripheral blood leukocytes, pancreas and liver astrocytes. Moderate levels in thymus, spleen and lung. Low levels in placenta, prostate and small intestine. Also found in epidermal basal layer keratinocytes in skin disorders.

Its subcellular location is the secreted. Its function is as follows. Chemotactic for interleukin-activated T-cells but not unstimulated T-cells, neutrophils or monocytes. Induces calcium release in activated T-cells. Binds to CXCR3. May play an important role in CNS diseases which involve T-cell recruitment. May play a role in skin immune responses. The chain is C-X-C motif chemokine 11 (CXCL11) from Homo sapiens (Human).